We begin with the raw amino-acid sequence, 494 residues long: Probable cytosol aminopeptidase (494 aa).

Mn(2+) contacts are provided by Lys260 and Asp265. The active site involves Lys272. Mn(2+)-binding residues include Asp283, Asp342, and Glu344. Arg346 is an active-site residue.

The protein belongs to the peptidase M17 family. It depends on Mn(2+) as a cofactor.

The protein resides in the cytoplasm. It catalyses the reaction Release of an N-terminal amino acid, Xaa-|-Yaa-, in which Xaa is preferably Leu, but may be other amino acids including Pro although not Arg or Lys, and Yaa may be Pro. Amino acid amides and methyl esters are also readily hydrolyzed, but rates on arylamides are exceedingly low.. The catalysed reaction is Release of an N-terminal amino acid, preferentially leucine, but not glutamic or aspartic acids.. In terms of biological role, presumably involved in the processing and regular turnover of intracellular proteins. Catalyzes the removal of unsubstituted N-terminal amino acids from various peptides. The chain is Probable cytosol aminopeptidase from Bacillus mycoides (strain KBAB4) (Bacillus weihenstephanensis).